Here is a 414-residue protein sequence, read N- to C-terminus: L-cysteine:1D-myo-inositol 2-amino-2-deoxy-alpha-D-glucopyranoside ligase (414 aa).

A disordered region spans residues 1-38 (MRSWPAPEVPNLPEAGLPGPALPLHLHDTATGTVRPTR). Positions 11–38 (NLPEAGLPGPALPLHLHDTATGTVRPTR) are enriched in low complexity. Residue Cys48 coordinates Zn(2+). Residues 48 to 51 (CGIT), Thr63, and 86 to 88 (NVT) contribute to the L-cysteinyl-5'-AMP site. The short motif at 50 to 60 (ITPYDATHLGH) is the 'HIGH' region element. The 'ERGGDP' region motif lies at 188–193 (ERGGDP). Position 228 (Trp228) interacts with L-cysteinyl-5'-AMP. Cys232 provides a ligand contact to Zn(2+). Residue 250-252 (GSD) coordinates L-cysteinyl-5'-AMP. Residue His257 coordinates Zn(2+). An L-cysteinyl-5'-AMP-binding site is contributed by Val284. The short motif at 290–294 (KMSKS) is the 'KMSKS' region element.

It belongs to the class-I aminoacyl-tRNA synthetase family. MshC subfamily. As to quaternary structure, monomer. It depends on Zn(2+) as a cofactor.

It carries out the reaction 1D-myo-inositol 2-amino-2-deoxy-alpha-D-glucopyranoside + L-cysteine + ATP = 1D-myo-inositol 2-(L-cysteinylamino)-2-deoxy-alpha-D-glucopyranoside + AMP + diphosphate + H(+). Catalyzes the ATP-dependent condensation of GlcN-Ins and L-cysteine to form L-Cys-GlcN-Ins. The chain is L-cysteine:1D-myo-inositol 2-amino-2-deoxy-alpha-D-glucopyranoside ligase from Thermomonospora curvata (strain ATCC 19995 / DSM 43183 / JCM 3096 / KCTC 9072 / NBRC 15933 / NCIMB 10081 / Henssen B9).